Consider the following 445-residue polypeptide: Homoserine dehydrogenase (445 aa).

NADPH is bound by residues Phe-26, Thr-28, and Val-29. Positions 29 and 58 each coordinate NAD(+). An NADP(+)-binding site is contributed by Val-29. Position 119 (Lys-119) interacts with NADPH. An NADP(+)-binding site is contributed by Lys-119. Residues Glu-143, Val-146, Gly-148, and Ile-150 each contribute to the Na(+) site. Residues Gly-201 and Glu-204 each contribute to the NADP(+) site. The L-homoserine site is built by Glu-204 and Asp-215. Lys-219 acts as the Proton donor in catalysis. Gly-321 contributes to the NADPH binding site. Residue Gly-321 coordinates NAD(+). Gly-321 provides a ligand contact to NADP(+). An ACT domain is found at His-368–Asp-445.

The protein belongs to the homoserine dehydrogenase family. It depends on a metal cation as a cofactor.

It catalyses the reaction L-homoserine + NADP(+) = L-aspartate 4-semialdehyde + NADPH + H(+). The catalysed reaction is L-homoserine + NAD(+) = L-aspartate 4-semialdehyde + NADH + H(+). The protein operates within amino-acid biosynthesis; L-methionine biosynthesis via de novo pathway; L-homoserine from L-aspartate: step 3/3. It functions in the pathway amino-acid biosynthesis; L-threonine biosynthesis; L-threonine from L-aspartate: step 3/5. Its activity is regulated as follows. Feedback inhibition by threonine. Its function is as follows. Catalyzes the conversion of L-aspartate-beta-semialdehyde (L-Asa) to L-homoserine (L-Hse), the third step in the biosynthesis of threonine and methionine from aspartate. The protein is Homoserine dehydrogenase (hom) of Corynebacterium glutamicum (strain ATCC 13032 / DSM 20300 / JCM 1318 / BCRC 11384 / CCUG 27702 / LMG 3730 / NBRC 12168 / NCIMB 10025 / NRRL B-2784 / 534).